The chain runs to 112 residues: Mitochondrial import inner membrane translocase subunit TIM14-3 (112 aa).

Ala-2 carries the post-translational modification N-acetylalanine. A helical membrane pass occupies residues 6–28 (IAGAAVAAAAVAGRYGILAWQAF). The region spanning 53 to 112 (EAALILGVRESVVADKVKEAHRRVMVANHPDAGGSHYLASKINEAKDMMLGKSNNSGSAF) is the J domain.

This sequence belongs to the TIM14 family. Probable component of the PAM complex at least composed of a mitochondrial HSP70 protein, TIMM44 and TIMM14. The complex interacts with the TIMM23 component of the TIM17:23 complex.

The protein localises to the mitochondrion. Its subcellular location is the mitochondrion inner membrane. Its function is as follows. Component of the PAM complex, a complex required for the translocation of transit peptide-containing proteins from the inner membrane into the mitochondrial matrix in an ATP-dependent manner. The protein is Mitochondrial import inner membrane translocase subunit TIM14-3 (TIM14-3) of Arabidopsis thaliana (Mouse-ear cress).